The primary structure comprises 328 residues: Phosphatidylglycerol--prolipoprotein diacylglyceryl transferase (328 aa).

3 helical membrane-spanning segments follow: residues 15–35 (VIQG…ILIS), 57–77 (IFMF…STLV), and 106–126 (GMAI…TINT). Residue R156 participates in a 1,2-diacyl-sn-glycero-3-phospho-(1'-sn-glycerol) binding. 2 helical membrane passes run 242–262 (GFIF…IEYL) and 289–309 (ISMG…WIIV).

The protein belongs to the Lgt family.

Its subcellular location is the cell inner membrane. It catalyses the reaction L-cysteinyl-[prolipoprotein] + a 1,2-diacyl-sn-glycero-3-phospho-(1'-sn-glycerol) = an S-1,2-diacyl-sn-glyceryl-L-cysteinyl-[prolipoprotein] + sn-glycerol 1-phosphate + H(+). The protein operates within protein modification; lipoprotein biosynthesis (diacylglyceryl transfer). Its function is as follows. Catalyzes the transfer of the diacylglyceryl group from phosphatidylglycerol to the sulfhydryl group of the N-terminal cysteine of a prolipoprotein, the first step in the formation of mature lipoproteins. This Borreliella burgdorferi (strain ATCC 35210 / DSM 4680 / CIP 102532 / B31) (Borrelia burgdorferi) protein is Phosphatidylglycerol--prolipoprotein diacylglyceryl transferase.